A 210-amino-acid polypeptide reads, in one-letter code: uncharacterized protein (210 aa).

This is an uncharacterized protein from Mycobacterium bovis (strain ATCC BAA-935 / AF2122/97).